The sequence spans 684 residues: Protein ecdysoneless (684 aa).

Positions 491-501 (EPELDSDDDEP) are enriched in acidic residues. Disordered stretches follow at residues 491–528 (EPEL…CQRN) and 603–624 (TSVG…EDDF).

This sequence belongs to the ECD family. As to expression, expressed in the ecdysone-producing larval ring gland, nervous system, imaginal disks and gonads.

It is found in the cytoplasm. Functionally, required in both the follicle cells and the germline for oocyte development. This Drosophila melanogaster (Fruit fly) protein is Protein ecdysoneless.